A 180-amino-acid polypeptide reads, in one-letter code: NAD(P)H-quinone oxidoreductase subunit I, chloroplastic (180 aa).

2 consecutive 4Fe-4S ferredoxin-type domains span residues 55–84 (GRIH…VDWK) and 95–124 (LNYS…MTEE). [4Fe-4S] cluster-binding residues include Cys64, Cys67, Cys70, Cys74, Cys104, Cys107, Cys110, and Cys114.

This sequence belongs to the complex I 23 kDa subunit family. NDH is composed of at least 16 different subunits, 5 of which are encoded in the nucleus. [4Fe-4S] cluster serves as cofactor.

The protein resides in the plastid. It localises to the chloroplast thylakoid membrane. The enzyme catalyses a plastoquinone + NADH + (n+1) H(+)(in) = a plastoquinol + NAD(+) + n H(+)(out). The catalysed reaction is a plastoquinone + NADPH + (n+1) H(+)(in) = a plastoquinol + NADP(+) + n H(+)(out). NDH shuttles electrons from NAD(P)H:plastoquinone, via FMN and iron-sulfur (Fe-S) centers, to quinones in the photosynthetic chain and possibly in a chloroplast respiratory chain. The immediate electron acceptor for the enzyme in this species is believed to be plastoquinone. Couples the redox reaction to proton translocation, and thus conserves the redox energy in a proton gradient. This chain is NAD(P)H-quinone oxidoreductase subunit I, chloroplastic, found in Ranunculus macranthus (Large buttercup).